The primary structure comprises 389 residues: Gustatory receptor 68a (389 aa).

Residues 1–42 (MKIYQDIYPISKPSQIFAILPFYSGDVDDGFRFGGLGRWYGR) are Cytoplasmic-facing. The chain crosses the membrane as a helical span at residues 43-63 (LVALIILIGSLTLGEDVLFAS). At 64–82 (KEYRLVASAQGDTEEINRT) the chain is on the extracellular side. Asn-80 carries an N-linked (GlcNAc...) asparagine glycan. The chain crosses the membrane as a helical span at residues 83–103 (IETLLCIISYTMVVLSSVQNA). At 104–133 (SRHFRTLHDIAKIDEYLLANGFRETYSCRN) the chain is on the cytoplasmic side. Residues 134-154 (LTILVTSAAGGVLAVAFYYIH) form a helical membrane-spanning segment. Topologically, residues 155–164 (YRSGIGAKRQ) are extracellular. The helical transmembrane segment at 165 to 185 (IILLLIYFLQLLYSTLLALYL) threads the bilayer. The Cytoplasmic portion of the chain corresponds to 186 to 236 (RTLMMNLAQRIGFLNQKLDTFNLQDCGHMENWRELSNLIEVLCKFRYITEN). The helical transmembrane segment at 237 to 257 (INCVAGVSLLFYFGFSFYTVT) threads the bilayer. N-linked (GlcNAc...) asparagine glycosylation is present at Asn-258. Residues 258 to 281 (NQSYLAFATLTAGSLSSKTEVADT) lie on the Extracellular side of the membrane. A helical transmembrane segment spans residues 282-302 (IGLSCIWVLAETITMIVICSA). Topologically, residues 303 to 352 (CDGLASEVNGTAQILARIYGKSKQFQNLIDKFLTKSIKQDLQFTAYGFFS) are cytoplasmic. A helical membrane pass occupies residues 353 to 373 (IDNSTLFKIFSAVTTYLVILI). The Extracellular portion of the chain corresponds to 374-389 (QFKQLEDSKVEDISQA).

This sequence belongs to the insect chemoreceptor superfamily. Gustatory receptor (GR) family. Gr21a subfamily. As to expression, expressed in chemosensory neurons of about 20 male-specific gustatory bristles in the forelegs. No expression is seen in the mechanosensory neurons. In larvae, expressed in the ventral pharyngeal sense organ.

The protein resides in the cell membrane. Functionally, dsx-dependent essential component of pheromone-driven courtship behavior. Recognizes a female pheromone involved in the second step (tapping step) of the courtship display which is essential for efficient execution of the entire courtship sequence and timely mating. Required for detection of the male sex pheromone CH503 which is transferred from males to females during mating and inhibits courtship behavior by other males. Gr68a-expressing neurons in the male foreleg relay signals to the suboesophageal zone (SEZ) and courtship suppression is mediated by the release of the neuropeptide tachykinin from a cluster of 8-10 neurons in the SEZ. The chain is Gustatory receptor 68a (Gr68a) from Drosophila melanogaster (Fruit fly).